We begin with the raw amino-acid sequence, 143 residues long: 5-hydroxymethyl-dUMP N-hydrolase (143 aa).

The 5-hydroxymethyl-dUMP site is built by Gly-7, Ile-9, Arg-10, Gly-11, Ser-77, Gly-79, Glu-83, and Ser-107.

Belongs to the 2'-deoxynucleoside 5'-phosphate N-hydrolase 1 family. As to quaternary structure, monomer and homodimer.

The protein resides in the cytoplasm. It is found in the nucleus. The enzyme catalyses 5-hydroxymethyl-dUMP + H2O = 5-hydroxymethyluracil + 2-deoxy-D-ribose 5-phosphate. Its function is as follows. Part of a nucleotide salvage pathway that eliminates epigenetically modified 5-hydroxymethyl-dCMP (hmdCMP) in a two-step process entailing deamination to cytotoxic 5-hydroxymethyl-dUMP (hmdUMP), followed by its hydrolysis into 5-hydroxymethyluracil (hmU) and 2-deoxy-D-ribose 5-phosphate (deoxyribosephosphate). This chain is 5-hydroxymethyl-dUMP N-hydrolase (dnph1), found in Danio rerio (Zebrafish).